A 337-amino-acid polypeptide reads, in one-letter code: N-acetyl-gamma-glutamyl-phosphate reductase (337 aa).

Cys-145 is a catalytic residue.

This sequence belongs to the NAGSA dehydrogenase family. Type 1 subfamily.

The protein resides in the cytoplasm. The catalysed reaction is N-acetyl-L-glutamate 5-semialdehyde + phosphate + NADP(+) = N-acetyl-L-glutamyl 5-phosphate + NADPH + H(+). It functions in the pathway amino-acid biosynthesis; L-arginine biosynthesis; N(2)-acetyl-L-ornithine from L-glutamate: step 3/4. Its function is as follows. Catalyzes the NADPH-dependent reduction of N-acetyl-5-glutamyl phosphate to yield N-acetyl-L-glutamate 5-semialdehyde. The protein is N-acetyl-gamma-glutamyl-phosphate reductase of Methanosarcina barkeri (strain Fusaro / DSM 804).